The primary structure comprises 293 residues: Elongation factor Ts (293 aa).

The involved in Mg(2+) ion dislocation from EF-Tu stretch occupies residues 81–84 (TDFV).

The protein belongs to the EF-Ts family.

It is found in the cytoplasm. Functionally, associates with the EF-Tu.GDP complex and induces the exchange of GDP to GTP. It remains bound to the aminoacyl-tRNA.EF-Tu.GTP complex up to the GTP hydrolysis stage on the ribosome. The chain is Elongation factor Ts from Methylococcus capsulatus (strain ATCC 33009 / NCIMB 11132 / Bath).